A 97-amino-acid polypeptide reads, in one-letter code: Ferredoxin-like protein YdiT (97 aa).

The protein belongs to the bacterial-type ferredoxin family. FixX subfamily.

Functionally, could be a 3Fe-4S cluster-containing protein. Probably participates in a redox process with YdiQ, YdiR and YdiS. The sequence is that of Ferredoxin-like protein YdiT (ydiT) from Escherichia coli (strain K12).